The following is a 134-amino-acid chain: Waprin-Phi1 (134 aa).

Residues 1–23 form the signal peptide; the sequence is MTLRRGSCPLLLFSLVGLLTTCA. 2 WAP domains span residues 36–82 and 83–133; these read VAEK…SCQI and PDEK…TTAR. 8 disulfide bridges follow: C43–C72, C55–C76, C59–C71, C65–C80, C90–C120, C103–C124, C107–C119, and C113–C129.

This sequence belongs to the venom waprin family. In terms of tissue distribution, expressed by the venom gland.

The protein resides in the secreted. In terms of biological role, damages membranes of susceptible bacteria. Has no hemolytic activity. Not toxic to mice. Does not inhibit the proteinases elastase and cathepsin G. The sequence is that of Waprin-Phi1 from Philodryas olfersii (Green snake).